A 452-amino-acid polypeptide reads, in one-letter code: Ethanolamine kinase 1 (452 aa).

The segment at 26 to 64 is disordered; the sequence is AVQTRIGNSAASRRSPAARPPVPAPPALPRGRPGTEGST. Over residues 43 to 53 the composition is skewed to pro residues; that stretch reads ARPPVPAPPAL.

The protein belongs to the choline/ethanolamine kinase family. Expressed in kidney, liver, placenta, heart, leukocyte, ovary and testis.

The protein resides in the cytoplasm. The enzyme catalyses ethanolamine + ATP = phosphoethanolamine + ADP + H(+). Its pathway is phospholipid metabolism; phosphatidylethanolamine biosynthesis; phosphatidylethanolamine from ethanolamine: step 1/3. Highly specific for ethanolamine phosphorylation. May be a rate-controlling step in phosphatidylethanolamine biosynthesis. The polypeptide is Ethanolamine kinase 1 (Homo sapiens (Human)).